Consider the following 492-residue polypeptide: MFSSAHSGLLEKLFHYIDLHQDEFVQTLKEWVAIESDSVQPVPRLRQKLFQMMALAADKLRNLGAGVESIDLGSQQMPDGQSLPIPPILLAELGSDPEKPTVCFYGHLDVQPAQKDDGWLTDPYTLTEVDGKLYGRGATDNKGPVLAWINAVSTFRALQQDLPVNIKFILEGMEEAGSIALEELVMREKDHFFSSVDYIVISDNLWLSQRKPALTYGTRGNCYFTVEVKCRDQDFHSGTFGGILNEPMADLVALLGSLVDSSGHILIPGIYDQMAPITEGEKTMYKNIDMDLEEYQNINQVEKFLFDTKEELLMHLWRYPSLSIHGIEGAFDEPGTKTVIPGRVLGKFSIRLVPTMSPSVVEKQVTQHLEAVFSKRNSFNKMAVSMVLGLHPWTANVNDTQYLAAQRTIKTVFGVNPDMIRDGSTIPIAKIFQAITQKSVMMLPLGAVDDGEHSQNEKINRWNYIQGSKLFAAFFLELSKQHSGHQMPSSVY.

His107 contributes to the Zn(2+) binding site. Asp109 is a catalytic residue. Asp140 lines the Zn(2+) pocket. Glu174 (proton acceptor) is an active-site residue. Glu175 contributes to the Zn(2+) binding site. Ser194 bears the Phosphoserine mark. Positions 203 and 453 each coordinate Zn(2+).

It belongs to the peptidase M20A family. As to quaternary structure, homodimer. Requires Zn(2+) as cofactor. As to expression, detected exclusively in kidney.

The protein localises to the secreted. The catalysed reaction is Preferential hydrolysis of the beta-Ala-|-His dipeptide (carnosine), and also anserine, Xaa-|-His dipeptides and other dipeptides including homocarnosine.. It catalyses the reaction carnosine + H2O = beta-alanine + L-histidine. It carries out the reaction anserine + H2O = N(pros)-methyl-L-histidine + beta-alanine. The enzyme catalyses L-alanyl-L-histidine + H2O = L-histidine + L-alanine. The catalysed reaction is glycyl-L-histidine + H2O = L-histidine + glycine. It catalyses the reaction L-homocarnosine + H2O = 4-aminobutanoate + L-histidine. Catalyzes the peptide bond hydrolysis in Xaa-His dipeptides, displaying the highest activity toward carnosine (beta-alanyl-L-histidine) and anserine (beta-alanyl-3-methyl-histidine). This Mus musculus (Mouse) protein is Beta-Ala-His dipeptidase (Cndp1).